A 1375-amino-acid chain; its full sequence is Probable GMP synthase [glutamine-hydrolyzing] (1375 aa).

The Glutamine amidotransferase type-1; first part domain maps to 7–119; the sequence is QILVLDFGSQ…VLEIMESSQD (113 aa). Cys84 acts as the Nucleophile in catalysis. Positions 120–500 are insert-1; sequence SKDSSCFAFQ…NNATQGFKSC (381 aa). N-acetyltransferase domains are found at residues 141–300 and 318–484; these read LSFD…KALE and VFLR…LEKK. In terms of domain architecture, Glutamine amidotransferase type-1; second part spans 501 to 580; that stretch reads SLFKGIKQDS…AVGICGANTC (80 aa). Active-site residues include His554 and Glu556. The tract at residues 597–1071 is insert-2; the sequence is IVYGGKAHCE…SGVANSLKIT (475 aa). In terms of domain architecture, N-acetyltransferase 3 spans 612 to 765; sequence MQIQEAFKHI…ELIPLSIARE (154 aa). Residues 1011-1036 are disordered; sequence RIVDSQHTESSDIKGQSHLESSADSG. Over residues 1014-1027 the composition is skewed to basic and acidic residues; that stretch reads DSQHTESSDIKGQS. One can recognise a GMPS ATP-PPase domain in the interval 1055–1250; the sequence is YLEGNDRSGV…LGMPESMLMR (196 aa). 1083–1089 lines the ATP pocket; it reads SGGVDSS.

As to quaternary structure, homodimer.

It catalyses the reaction XMP + L-glutamine + ATP + H2O = GMP + L-glutamate + AMP + diphosphate + 2 H(+). It functions in the pathway purine metabolism; GMP biosynthesis; GMP from XMP (L-Gln route): step 1/1. Catalyzes the synthesis of GMP from XMP. The polypeptide is Probable GMP synthase [glutamine-hydrolyzing] (guaA) (Helicobacter hepaticus (strain ATCC 51449 / 3B1)).